Reading from the N-terminus, the 344-residue chain is Anthranilate phosphoribosyltransferase (344 aa).

5-phospho-alpha-D-ribose 1-diphosphate-binding positions include Gly79, 82 to 83, Thr87, 89 to 92, 107 to 115, and Ser119; these read GD, NIST, and KHGNRSVSS. Gly79 contacts anthranilate. Ser91 is a Mg(2+) binding site. Asn110 is a binding site for anthranilate. Arg165 contributes to the anthranilate binding site. Residues Asp224 and Glu225 each coordinate Mg(2+).

Belongs to the anthranilate phosphoribosyltransferase family. As to quaternary structure, homodimer. Mg(2+) is required as a cofactor.

It carries out the reaction N-(5-phospho-beta-D-ribosyl)anthranilate + diphosphate = 5-phospho-alpha-D-ribose 1-diphosphate + anthranilate. It participates in amino-acid biosynthesis; L-tryptophan biosynthesis; L-tryptophan from chorismate: step 2/5. Catalyzes the transfer of the phosphoribosyl group of 5-phosphorylribose-1-pyrophosphate (PRPP) to anthranilate to yield N-(5'-phosphoribosyl)-anthranilate (PRA). In Salinibacter ruber (strain DSM 13855 / M31), this protein is Anthranilate phosphoribosyltransferase.